Consider the following 657-residue polypeptide: DNA mismatch repair protein MutL (657 aa).

Belongs to the DNA mismatch repair MutL/HexB family.

Functionally, this protein is involved in the repair of mismatches in DNA. It is required for dam-dependent methyl-directed DNA mismatch repair. May act as a 'molecular matchmaker', a protein that promotes the formation of a stable complex between two or more DNA-binding proteins in an ATP-dependent manner without itself being part of a final effector complex. The chain is DNA mismatch repair protein MutL from Streptococcus agalactiae serotype III (strain NEM316).